The following is a 276-amino-acid chain: Large ribosomal subunit protein uL2 (276 aa).

The disordered stretch occupies residues 221 to 276; it reads RGSAMNPNDHPHGGGEGRAPIGRKSPMTPWGKKARGVKTRDRKKASNALIIRRRTK. The span at 252-276 shows a compositional bias: basic residues; sequence KKARGVKTRDRKKASNALIIRRRTK.

It belongs to the universal ribosomal protein uL2 family. As to quaternary structure, part of the 50S ribosomal subunit. Forms a bridge to the 30S subunit in the 70S ribosome.

Functionally, one of the primary rRNA binding proteins. Required for association of the 30S and 50S subunits to form the 70S ribosome, for tRNA binding and peptide bond formation. It has been suggested to have peptidyltransferase activity; this is somewhat controversial. Makes several contacts with the 16S rRNA in the 70S ribosome. In Onion yellows phytoplasma (strain OY-M), this protein is Large ribosomal subunit protein uL2.